The primary structure comprises 428 residues: Folylpolyglutamate synthase (428 aa).

49–52 (GKGS) provides a ligand contact to ATP. Residue Ser73 participates in Mg(2+) binding. (6R)-5,10-methylenetetrahydrofolyl-(gamma-L-Glu)n-binding residues include Phe75 and Arg82. The Mg(2+) site is built by Glu143 and His170. Lys185 carries the post-translational modification N6-carboxylysine. ATP is bound by residues Asn264, Arg300, and 313-316 (DGAH). Ser417 contributes to the (6R)-5,10-methylenetetrahydrofolyl-(gamma-L-Glu)n binding site.

This sequence belongs to the folylpolyglutamate synthase family. Monomer. Mg(2+) is required as a cofactor.

It carries out the reaction (6S)-5,6,7,8-tetrahydrofolyl-(gamma-L-Glu)(n) + L-glutamate + ATP = (6S)-5,6,7,8-tetrahydrofolyl-(gamma-L-Glu)(n+1) + ADP + phosphate + H(+). The enzyme catalyses (6R)-5,10-methylenetetrahydrofolyl-(gamma-L-Glu)(n) + L-glutamate + ATP = (6R)-5,10-methylenetetrahydrofolyl-(gamma-L-Glu)(n+1) + ADP + phosphate + H(+). It catalyses the reaction 10-formyltetrahydrofolyl-(gamma-L-Glu)(n) + L-glutamate + ATP = 10-formyltetrahydrofolyl-(gamma-L-Glu)(n+1) + ADP + phosphate + H(+). With respect to regulation, competitively inhibited by adenosine 5'-(3-thio)triphosphate and beta,gamma-methylene-ATP. Its function is as follows. Involved in the conversion of folates to polyglutamate derivatives, and likely functions in the retention of cellular folate pools. Catalyzes successive MgATP-dependent additions of glutamate to a pteroylmonoglutamate substrate, with a high preference for 5,10-methylenetetrahydrofolate (mTHF). Thus, metabolizes mTHF to the tetraglutamate derivative, but longer glutamate chain length products are not observed. Tetrahydrofolate (H4PteGlu) and 10-formyl-H4PteGlu are poorer folate substrates. In contrast to E.coli FolC, this enzyme does not display dihydrofolate synthase activity. This chain is Folylpolyglutamate synthase, found in Lacticaseibacillus casei (Lactobacillus casei).